Consider the following 97-residue polypeptide: Integration host factor subunit alpha (97 aa).

This sequence belongs to the bacterial histone-like protein family. As to quaternary structure, heterodimer of an alpha and a beta chain.

This protein is one of the two subunits of integration host factor, a specific DNA-binding protein that functions in genetic recombination as well as in transcriptional and translational control. The protein is Integration host factor subunit alpha of Histophilus somni (strain 2336) (Haemophilus somnus).